A 208-amino-acid chain; its full sequence is Type 3 secretion system stator protein (208 aa).

The protein belongs to the SctL stator family. In terms of assembly, the core secretion machinery of the T3SS is composed of approximately 20 different proteins, including cytoplasmic components, a base, an export apparatus and a needle. This subunit is part of the cytosolic complex.

The protein resides in the cytoplasm. Functionally, component of the type III secretion system (T3SS), also called injectisome, which is used to inject bacterial effector proteins into eukaryotic host cells. Acts as a regulator of the HrcN/SctN ATPase activity. The chain is Type 3 secretion system stator protein from Sinorhizobium fredii (strain NBRC 101917 / NGR234).